Consider the following 573-residue polypeptide: SHC-transforming protein 2 (573 aa).

In terms of domain architecture, PID spans 125 to 307 (LGPGVSYIVR…TGLEESAWGD (183 aa)). Residues 478–569 (WYHGRMSRRA…ESELHLRGVV (92 aa)) enclose the SH2 domain.

In terms of assembly, interacts with the Trk receptors in a phosphotyrosine-dependent manner and MEGF12. Once activated, binds to GRB2. Post-translationally, phosphorylated on tyrosine by the Trk receptors.

Its function is as follows. Signaling adapter that couples activated growth factor receptors to signaling pathway in neurons. Involved in the signal transduction pathways of neurotrophin-activated Trk receptors in cortical neurons. This chain is SHC-transforming protein 2 (Shc2), found in Rattus norvegicus (Rat).